A 198-amino-acid polypeptide reads, in one-letter code: Recombination protein RecR (198 aa).

A C4-type zinc finger spans residues Cys57–Cys72. Residues Ser80–Pro175 form the Toprim domain.

The protein belongs to the RecR family.

May play a role in DNA repair. It seems to be involved in an RecBC-independent recombinational process of DNA repair. It may act with RecF and RecO. The chain is Recombination protein RecR from Bacillus licheniformis (strain ATCC 14580 / DSM 13 / JCM 2505 / CCUG 7422 / NBRC 12200 / NCIMB 9375 / NCTC 10341 / NRRL NRS-1264 / Gibson 46).